A 152-amino-acid polypeptide reads, in one-letter code: Small ribosomal subunit protein uS15 (152 aa).

The segment covering 1–19 has biased composition (basic residues); the sequence is MAKMHTRRKGRSRSTRPVR. The tract at residues 1-21 is disordered; sequence MAKMHTRRKGRSRSTRPVRKT.

The protein belongs to the universal ribosomal protein uS15 family. As to quaternary structure, part of the 30S ribosomal subunit.

This is Small ribosomal subunit protein uS15 from Methanocella arvoryzae (strain DSM 22066 / NBRC 105507 / MRE50).